Here is a 682-residue protein sequence, read N- to C-terminus: Elongation factor G (682 aa).

Residues 8 to 282 form the tr-type G domain; sequence QKFRNFGIMA…AVVDYLPSPV (275 aa). GTP contacts are provided by residues 17 to 24, 81 to 85, and 135 to 138; these read AHIDAGKT, DTPGH, and NKMD.

It belongs to the TRAFAC class translation factor GTPase superfamily. Classic translation factor GTPase family. EF-G/EF-2 subfamily.

The protein resides in the cytoplasm. Catalyzes the GTP-dependent ribosomal translocation step during translation elongation. During this step, the ribosome changes from the pre-translocational (PRE) to the post-translocational (POST) state as the newly formed A-site-bound peptidyl-tRNA and P-site-bound deacylated tRNA move to the P and E sites, respectively. Catalyzes the coordinated movement of the two tRNA molecules, the mRNA and conformational changes in the ribosome. The chain is Elongation factor G from Malacoplasma penetrans (strain HF-2) (Mycoplasma penetrans).